Here is a 386-residue protein sequence, read N- to C-terminus: Ovalbumin (386 aa).

An N-acetylglycine modification is found at Gly2. Ser69 carries the post-translational modification Phosphoserine. Cys74 and Cys121 are disulfide-bonded. A glycan (N-linked (GlcNAc...) asparagine) is linked at Asn293. Ser345 carries the phosphoserine modification.

Belongs to the serpin family. Ov-serpin subfamily. The N-terminus is blocked.

Its subcellular location is the secreted. Functionally, storage protein of egg white. Lacks protease inhibitory activity. The sequence is that of Ovalbumin (SERPINB14) from Dromaius novaehollandiae (Emu).